The primary structure comprises 129 residues: NADH-quinone oxidoreductase subunit A (129 aa).

3 helical membrane passes run 14–34 (LAIHVALSAGIVAAIIGVAAV), 67–87 (FLIAALFVIFDMEAAILFAWA), and 97–117 (GLIEAAIFIGVLLLALVYLWI).

This sequence belongs to the complex I subunit 3 family. As to quaternary structure, NDH-1 is composed of 14 different subunits. Subunits NuoA, H, J, K, L, M, N constitute the membrane sector of the complex.

The protein resides in the cell inner membrane. The catalysed reaction is a quinone + NADH + 5 H(+)(in) = a quinol + NAD(+) + 4 H(+)(out). In terms of biological role, NDH-1 shuttles electrons from NADH, via FMN and iron-sulfur (Fe-S) centers, to quinones in the respiratory chain. The immediate electron acceptor for the enzyme in this species is believed to be ubiquinone. Couples the redox reaction to proton translocation (for every two electrons transferred, four hydrogen ions are translocated across the cytoplasmic membrane), and thus conserves the redox energy in a proton gradient. The chain is NADH-quinone oxidoreductase subunit A from Rhodopseudomonas palustris (strain BisB18).